A 995-amino-acid polypeptide reads, in one-letter code: Meckelin (995 aa).

The signal sequence occupies residues 1–36 (MATRGGAGVAMAVWSLLSARAVTAFLLLFLPRFLQA). The cysteine-rich stretch occupies residues 37–280 (QTFSFPFQQP…FQFIFENTAG (244 aa)). Residues 37–519 (QTFSFPFQQP…SVTYEMDHGE (483 aa)) lie on the Extracellular side of the membrane. 11 disulfide bridges follow: C49–C62, C65–C78, C80–C97, C100–C114, C117–C127, C129–C150, C153–C170, C173–C184, C186–C197, C237–C246, and C253–C268. N-linked (GlcNAc...) asparagine glycosylation is present at N141. N-linked (GlcNAc...) asparagine glycosylation is present at N179. The N-linked (GlcNAc...) asparagine glycan is linked to N242. The N-linked (GlcNAc...) asparagine glycan is linked to N318. Residues C357 and C378 are joined by a disulfide bond. The helical transmembrane segment at 520-548 (AHVQTDIALGVLGGLAVLASLLKTAGWKR) threads the bilayer. The Cytoplasmic segment spans residues 549 to 558 (RIGSPMIDLQ). Residues 559–590 (TVVKFLVYYAGDLANVFFIITVGTGLYWLIFF) traverse the membrane as a helical segment. Topologically, residues 591–603 (KAQKSVSVLLPMP) are extracellular. Residues 604-631 (IQEERFVTYVGCAFALKALQFLHKLISQ) traverse the membrane as a helical segment. Over 632–670 (ITIDVFFIDWERPKGKVLKAVEGEGGVRSATVPVSIWRT) the chain is Cytoplasmic. Residues 671–679 (YFVANEWNE) constitute an intramembrane region (helical). Residues 671-701 (YFVANEWNEIQTVRKINSLFQVLTVLFFLEV) traverse the membrane as a discontinuously helical segment. An intramembrane segment occupies 680–688 (IQTVRKINS). Positions 689–701 (LFQVLTVLFFLEV) form an intramembrane region, helical. Topologically, residues 702 to 731 (VGFKNLALMDSSSSLSRNPPSYIAPYSCIL) are extracellular. The helical intramembrane region spans 732-757 (RYAVSAALWLAIGIIQVVFFAVFYER). A discontinuously helical transmembrane segment spans residues 732-771 (RYAVSAALWLAIGIIQVVFFAVFYERFIEDKIRQFVDLCS). Residues 758-762 (FIEDK) lie within the membrane without spanning it. Residues 763 to 771 (IRQFVDLCS) constitute an intramembrane region (helical). The Cytoplasmic portion of the chain corresponds to 772–926 (MSNISVFLLS…SIFYNDEGYS (155 aa)). Residues 828–917 (GQTFEIAISN…MEFMEPMEKS (90 aa)) adopt a coiled-coil conformation. The helical intramembrane region spans 927 to 929 (FSS). Residues 927–952 (FSSVLYYGNEATLLIFDLLFFCVVDL) traverse the membrane as a discontinuously helical segment. The stretch at 930-936 (VLYYGNE) is an intramembrane region. An intramembrane region (helical) is located at residues 937–952 (ATLLIFDLLFFCVVDL). The Extracellular segment spans residues 953 to 957 (ACQNF). Residues 958–985 (ILASFLTYLQQEIFRYIRNTVGQKNLAS) traverse the membrane as a helical segment. Residues 986–995 (KTLVDQRFLI) are Cytoplasmic-facing.

As to quaternary structure, homodimer. Part of the tectonic-like complex (also named B9 complex). Interacts with DNAJB9, DNAJC10 and mutated SFTPC. Interacts with SYNE2 during the early establishment of cell polarity. Interacts (via C-terminus) with FLNA. Interacts with TMEM218. Interacts with WNT5A. Interacts with ROR2. As to expression, widely expressed in adult and fetal tissues. Expressed at higher level in spinal cord.

The protein localises to the cell membrane. Its subcellular location is the endoplasmic reticulum membrane. The protein resides in the cell projection. It is found in the cilium. It localises to the cytoplasm. The protein localises to the cytoskeleton. Its subcellular location is the cilium basal body. Functionally, required for ciliary structure and function. Part of the tectonic-like complex which is required for tissue-specific ciliogenesis and may regulate ciliary membrane composition. Involved in centrosome migration to the apical cell surface during early ciliogenesis. Involved in the regulation of cilia length and appropriate number through the control of centrosome duplication. Is a key regulator of stereociliary bundle orientation. Required for epithelial cell branching morphology. Essential for endoplasmic reticulum-associated degradation (ERAD) of surfactant protein C (SFTPC). Involved in the negative regulation of canonical Wnt signaling, and activation of the non-canonical cascade stimulated by WNT5A. In non-canonical Wnt signaling, it may act as ROR2 coreceptor. In Homo sapiens (Human), this protein is Meckelin (TMEM67).